Reading from the N-terminus, the 421-residue chain is Testin (421 aa).

In terms of domain architecture, PET spans 92–199 (MILTNPVAAK…GDVKLPCEMD (108 aa)). Residues 133–164 (EKQPVAGSEGAQYRKKQLAKQLPAHDQDPSKC) are disordered. A compositionally biased stretch (basic and acidic residues) spans 155 to 164 (PAHDQDPSKC). LIM zinc-binding domains follow at residues 234 to 297 (YSCY…CDSE), 299 to 359 (PRCA…NHAV), and 362 to 421 (QGCH…KMMS).

Belongs to the prickle / espinas / testin family. As to quaternary structure, interacts via LIM domain 1 with ZYX. Interacts (via LIM domain 3) with ENAH and VASP. Interacts with ALKBH4, talin, actin, alpha-actinin, GRIP1 and PXN. Interacts (via LIM domain 2) with ACTL7A (via N-terminus). Heterodimer with ACTL7A; the heterodimer interacts with ENAH to form a heterotrimer.

It localises to the cytoplasm. Its subcellular location is the cell junction. The protein localises to the focal adhesion. Scaffold protein that may play a role in cell adhesion, cell spreading and in the reorganization of the actin cytoskeleton. Plays a role in the regulation of cell proliferation. May act as a tumor suppressor. This is Testin (TES) from Microcebus murinus (Gray mouse lemur).